Here is a 1196-residue protein sequence, read N- to C-terminus: Chromosome partition protein Smc (1196 aa).

32–39 provides a ligand contact to ATP; sequence PNGSGKSN. 2 coiled-coil regions span residues 168-288 and 327-497; these read LKHR…SVQQ and DALE…LERK. The SMC hinge domain occupies 510 to 621; sequence AGILGPMAKL…VDDLDRALAL (112 aa). Coiled-coil stretches lie at residues 654-829 and 972-1026; these read LEVT…RAQQ and DRPT…KDLL.

It belongs to the SMC family. In terms of assembly, homodimer.

It is found in the cytoplasm. Functionally, required for chromosome condensation and partitioning. The sequence is that of Chromosome partition protein Smc from Mycolicibacterium paratuberculosis (strain ATCC BAA-968 / K-10) (Mycobacterium paratuberculosis).